A 374-amino-acid polypeptide reads, in one-letter code: Glycerophosphodiester phosphodiesterase GDPD2 (374 aa).

The region spanning Phe38 to Thr326 is the GP-PDE domain. Positions Met330 to Val349 are disordered. A compositionally biased stretch (pro residues) spans Arg332–Ser342.

The protein belongs to the glycerophosphoryl diester phosphodiesterase family. In terms of tissue distribution, expressed in roots, shoots, flowers and siliques.

It carries out the reaction a sn-glycero-3-phosphodiester + H2O = an alcohol + sn-glycerol 3-phosphate + H(+). In Arabidopsis thaliana (Mouse-ear cress), this protein is Glycerophosphodiester phosphodiesterase GDPD2.